A 341-amino-acid polypeptide reads, in one-letter code: Serine/threonine-protein kinase PDIK1L (341 aa).

The region spanning 8-334 (YDLIREVGRG…LELRLVQIAF (327 aa)) is the Protein kinase domain. ATP-binding positions include 14–22 (VGRGSYGVV) and Lys37. The active-site Proton acceptor is the Asp164.

The protein belongs to the protein kinase superfamily. Ser/Thr protein kinase family.

It localises to the nucleus. It catalyses the reaction L-seryl-[protein] + ATP = O-phospho-L-seryl-[protein] + ADP + H(+). The catalysed reaction is L-threonyl-[protein] + ATP = O-phospho-L-threonyl-[protein] + ADP + H(+). In Mus musculus (Mouse), this protein is Serine/threonine-protein kinase PDIK1L (Pdik1l).